A 462-amino-acid polypeptide reads, in one-letter code: uncharacterized protein (462 aa).

The region spanning 12-70 (MLKKNDIIQVAISDLSHEGAGVAKHDGFVFFVDNALPEEVIDMRVLKVNKNSGFGKVEA) is the TRAM domain. Residues Gln294, Tyr323, Glu344, and Asp392 each coordinate S-adenosyl-L-methionine. Cys419 serves as the catalytic Nucleophile.

The protein belongs to the class I-like SAM-binding methyltransferase superfamily. RNA M5U methyltransferase family.

This is an uncharacterized protein from Streptococcus pyogenes serotype M1.